A 90-amino-acid polypeptide reads, in one-letter code: Probable Fe(2+)-trafficking protein (90 aa).

It belongs to the Fe(2+)-trafficking protein family.

Functionally, could be a mediator in iron transactions between iron acquisition and iron-requiring processes, such as synthesis and/or repair of Fe-S clusters in biosynthetic enzymes. In Idiomarina loihiensis (strain ATCC BAA-735 / DSM 15497 / L2-TR), this protein is Probable Fe(2+)-trafficking protein.